A 140-amino-acid chain; its full sequence is Fluoride-specific ion channel FluC 2 (140 aa).

A run of 4 helical transmembrane segments spans residues 7 to 27 (VPPL…LGAL), 45 to 65 (WATF…MVLV), 77 to 97 (PFAG…GLEI), and 106 to 126 (VLEA…GVVL). Na(+) contacts are provided by Gly-85 and Thr-88.

It belongs to the fluoride channel Fluc/FEX (TC 1.A.43) family.

Its subcellular location is the cell membrane. The catalysed reaction is fluoride(in) = fluoride(out). With respect to regulation, na(+) is not transported, but it plays an essential structural role and its presence is essential for fluoride channel function. Functionally, fluoride-specific ion channel. Important for reducing fluoride concentration in the cell, thus reducing its toxicity. This Nocardia farcinica (strain IFM 10152) protein is Fluoride-specific ion channel FluC 2.